The primary structure comprises 291 residues: 4-diphosphocytidyl-2-C-methyl-D-erythritol kinase (291 aa).

Lys11 is a catalytic residue. 95–105 (PVAAGLAGGSS) serves as a coordination point for ATP. Residue Asp137 is part of the active site.

The protein belongs to the GHMP kinase family. IspE subfamily.

It carries out the reaction 4-CDP-2-C-methyl-D-erythritol + ATP = 4-CDP-2-C-methyl-D-erythritol 2-phosphate + ADP + H(+). It functions in the pathway isoprenoid biosynthesis; isopentenyl diphosphate biosynthesis via DXP pathway; isopentenyl diphosphate from 1-deoxy-D-xylulose 5-phosphate: step 3/6. Catalyzes the phosphorylation of the position 2 hydroxy group of 4-diphosphocytidyl-2C-methyl-D-erythritol. This chain is 4-diphosphocytidyl-2-C-methyl-D-erythritol kinase, found in Alkaliphilus metalliredigens (strain QYMF).